The primary structure comprises 228 residues: Movement and silencing protein TGBp1 (228 aa).

Residues M1–L132 form the (+)RNA virus helicase ATP-binding domain. The 96-residue stretch at S133–S228 folds into the (+)RNA virus helicase C-terminal domain.

This sequence belongs to the Tymovirales TGBp1 protein family. Homodimer and homooligomer. Interacts with capsid protein. Interacts with host AGO1; this interaction targets the host protein for degradation, thereby suppressing the antiviral RNA silencing.

The protein resides in the host cytoplasm. In terms of biological role, transports viral genome to neighboring plant cells directly through plasmosdesmata, without any budding. The movement protein allows efficient cell to cell propagation, by bypassing the host cell wall barrier. Increases plasmodesma size exclusion limit. Acts as a suppressor of RNA-mediated gene silencing, also known as post-transcriptional gene silencing (PTGS), a mechanism of plant viral defense that limits the accumulation of viral RNAs. The protein is Movement and silencing protein TGBp1 of Lilium (LSV).